The following is a 286-amino-acid chain: Enoyl-CoA hydratase ChsH3 (286 aa).

The MaoC-like domain occupies 163 to 271 (APERAPDLQV…RLVASVVAPT (109 aa)). Active-site residues include D189 and H194.

It belongs to the enoyl-CoA hydratase/isomerase family. As to quaternary structure, homodimer.

The enzyme catalyses (22E)-3-oxochola-4,22-dien-24-oyl-CoA + H2O = (22S)-hydroxy-3-oxo-chol-4-ene-24-oyl-CoA. It participates in steroid metabolism; cholesterol degradation. Functionally, degradation of the cholesterol side chain involves 3 multistep beta-oxidation cycles, this is involved in the second cycle. Hydrates bulky steroid enoyl-CoA esters, has highest activity with 3-OCDO-CoA (3-oxochol-4,22-dien-24-oyl-CoA) making (22S)-HOCO-CoA, followed by octenoyl-CoA, with weaker activity on 3-OCDS-CoA (3-oxocholest-4,24-dien-26-oyl-CoA) and none on 3-OPDC-CoA (3-oxo-pregna-4,17-diene-20- carboxyl-CoA). Hydrates the same substrate as EchA19, but the 2 enzymes make different stereoisomers of the product. This is Enoyl-CoA hydratase ChsH3 from Mycobacterium tuberculosis (strain ATCC 25618 / H37Rv).